Reading from the N-terminus, the 208-residue chain is Pyridoxine/pyridoxamine 5'-phosphate oxidase (208 aa).

FMN is bound by residues 55–60 (RMVLLK), 70–71 (YT), K76, K77, and Q99. K60 provides a ligand contact to substrate. 3 residues coordinate substrate: Y117, R121, and S125. FMN contacts are provided by residues 134 to 135 (QS) and W179. 185–187 (RLH) provides a ligand contact to substrate. R189 contacts FMN.

Belongs to the pyridoxamine 5'-phosphate oxidase family. As to quaternary structure, homodimer. Requires FMN as cofactor.

The catalysed reaction is pyridoxamine 5'-phosphate + O2 + H2O = pyridoxal 5'-phosphate + H2O2 + NH4(+). The enzyme catalyses pyridoxine 5'-phosphate + O2 = pyridoxal 5'-phosphate + H2O2. The protein operates within cofactor metabolism; pyridoxal 5'-phosphate salvage; pyridoxal 5'-phosphate from pyridoxamine 5'-phosphate: step 1/1. Its pathway is cofactor metabolism; pyridoxal 5'-phosphate salvage; pyridoxal 5'-phosphate from pyridoxine 5'-phosphate: step 1/1. Catalyzes the oxidation of either pyridoxine 5'-phosphate (PNP) or pyridoxamine 5'-phosphate (PMP) into pyridoxal 5'-phosphate (PLP). This is Pyridoxine/pyridoxamine 5'-phosphate oxidase from Brucella abortus biovar 1 (strain 9-941).